The primary structure comprises 190 residues: Superoxide dismutase [Cu-Zn] (190 aa).

A signal peptide spans 1-23 (MKLTNLALAFTLFGASAVAFAHA). Histidine 83, histidine 85, and histidine 108 together coordinate Cu cation. A disulfide bridge connects residues cysteine 90 and cysteine 186. Zn(2+) is bound by residues histidine 108, histidine 117, histidine 126, and aspartate 129. A disordered region spans residues 162–181 (MIHEGGDNHSDHPAPLGGGG). Histidine 164 is a Cu cation binding site.

This sequence belongs to the Cu-Zn superoxide dismutase family. In terms of assembly, homodimer. Cu cation serves as cofactor. Requires Zn(2+) as cofactor.

The protein resides in the periplasm. It carries out the reaction 2 superoxide + 2 H(+) = H2O2 + O2. In terms of biological role, destroys radicals which are normally produced within the cells and which are toxic to biological systems. In Actinobacillus pleuropneumoniae (Haemophilus pleuropneumoniae), this protein is Superoxide dismutase [Cu-Zn] (sodC).